Consider the following 650-residue polypeptide: Serine/threonine-protein kinase oca2 (650 aa).

A compositionally biased stretch (polar residues) spans methionine 1–glycine 14. 2 disordered regions span residues methionine 1 to isoleucine 210 and histidine 222 to alanine 288. Phosphoserine is present on serine 72. Residues asparagine 78–glutamate 98 are compositionally biased toward basic and acidic residues. Residues proline 140 to asparagine 154 are compositionally biased toward polar residues. Basic residues-rich tracts occupy residues histidine 222 to histidine 231 and histidine 245 to histidine 257. Over residues histidine 258–proline 279 the composition is skewed to basic and acidic residues. Phosphoserine is present on serine 286. The Protein kinase domain occupies glycine 302–isoleucine 614. Residues leucine 308–valine 316 and lysine 331 contribute to the ATP site. The active-site Proton acceptor is the aspartate 425. A disordered region spans residues proline 549 to lysine 570.

The protein belongs to the protein kinase superfamily. Ser/Thr protein kinase family.

It is found in the cytoplasm. It catalyses the reaction L-seryl-[protein] + ATP = O-phospho-L-seryl-[protein] + ADP + H(+). The catalysed reaction is L-threonyl-[protein] + ATP = O-phospho-L-threonyl-[protein] + ADP + H(+). Overexpression causes cell cycle arrest. The sequence is that of Serine/threonine-protein kinase oca2 from Schizosaccharomyces pombe (strain 972 / ATCC 24843) (Fission yeast).